The following is a 486-amino-acid chain: MTAISNHVGTIVKLNPDYTQMDAVYLTNKLLNLIGDAALDLPGDADPLTNLDLMVKAAQENGKIPDSQAARQILEAQLMDLATPTPSRINQLFWDKYQAGPRVATDWFFALSRANNYIQTRAIAKNVVFPAKTEYGDLEITINLSKPEKDPKDIAAAAHAAQSGYPACALCLQTEGYAGRTDFAARTNHRIIRFLLGGKTWGFQYSPYAYFNEHAIFLDAIHEPMVIDQSTFSNLLSIVSMFPTYFVGSNADLPIVGGSMLTHEHYQGGRHTFPMAKAPIETQVEISGHPHVFAGIVKWPMSVIRLVSADSDELINAAEHVRQVWNQYTDETVDVRAFVDGKPHHTVTPIARRVGSEFQLDLVLRDNQTSAEHPDGIFHPHQDVQHIKKENIGLIEVMGRAILPARLKSELAEVQKYLLGEANTMKPMHKTWADQLKAKYDWTPENVEAQMQAAVGRVFARVLEDAGVFKRDEVGQKAFARFCRAL.

Belongs to the galactose-1-phosphate uridylyltransferase type 2 family.

Its subcellular location is the cytoplasm. The enzyme catalyses alpha-D-galactose 1-phosphate + UDP-alpha-D-glucose = alpha-D-glucose 1-phosphate + UDP-alpha-D-galactose. Its pathway is carbohydrate metabolism; galactose metabolism. This chain is Galactose-1-phosphate uridylyltransferase, found in Lacticaseibacillus casei (Lactobacillus casei).